Reading from the N-terminus, the 156-residue chain is Endoribonuclease YbeY (156 aa).

Positions 122, 126, and 132 each coordinate Zn(2+).

The protein belongs to the endoribonuclease YbeY family. It depends on Zn(2+) as a cofactor.

Its subcellular location is the cytoplasm. Its function is as follows. Single strand-specific metallo-endoribonuclease involved in late-stage 70S ribosome quality control and in maturation of the 3' terminus of the 16S rRNA. The protein is Endoribonuclease YbeY of Bacillus cereus (strain B4264).